The sequence spans 966 residues: Receptor protein-tyrosine kinase CEPR1 (966 aa).

The first 22 residues, 1–22 (MRLKNFPFFVLFFFFCFNSNQS), serve as a signal peptide directing secretion. The Extracellular portion of the chain corresponds to 23–592 (WGLMSSNQQP…QEPHGKKKLS (570 aa)). N-linked (GlcNAc...) asparagine glycosylation is present at N61. LRR repeat units lie at residues 70–94 (QGLV…VCSY), 95–120 (FPNL…TIPN), 122–144 (SLLR…FSQM), 145–168 (KSLR…IFNL), 170–194 (DLEY…VSKL), 195–218 (TKLT…IGNL), 219–242 (TSLV…IGNL), 245–267 (LRQL…IGNL), 268–291 (KNLT…ICSL), 292–315 (PNLR…LGNS), 317–339 (TLKI…LGSS), 341–363 (PMIA…VCKS), 365–386 (KLLY…TYGS), 387–411 (CKTL…VMSL), 412–435 (PHVS…IGNA), 437–459 (NLSE…LSHS), 460–483 (TNLV…VGRL), 484–507 (RKLN…LSNL), 508–531 (KSLN…LSEL), and 533–554 (PTSI…LIRG). N-linked (GlcNAc...) asparagine glycosylation is found at N109, N120, N128, and N167. Residues N217 and N241 are each glycosylated (N-linked (GlcNAc...) asparagine). 2 N-linked (GlcNAc...) asparagine glycosylation sites follow: N269 and N301. Residue N437 is glycosylated (N-linked (GlcNAc...) asparagine). N-linked (GlcNAc...) asparagine glycans are attached at residues N527 and N537. A helical membrane pass occupies residues 593-613 (SIWAILVSVFILVLGVIMFYL). At 614-966 (RQRMSKNRAV…VSDHLTQTRL (353 aa)) the chain is on the cytoplasmic side. In terms of domain architecture, Protein kinase spans 656-934 (LVDKNIVGHG…TMNEVVQLLI (279 aa)). Residues 662-670 (VGHGGSGTV) and K684 each bind ATP. Residues Y738 and Y775 each carry the phosphotyrosine modification. Catalysis depends on D788, which acts as the Proton acceptor. Phosphotyrosine is present on residues Y831 and Y838. The interval 937–966 (TPQGGPDMTSKPTTKIKDSIVSDHLTQTRL) is disordered.

It belongs to the protein kinase superfamily. Ser/Thr protein kinase family. In terms of assembly, interacts with the root-derived peptides CEP1, CEP3 and CEP5. As to expression, expressed in the vasculature, especially in phloem and procambium regions, of stems, leaves, cotyledons, sepals, pedals, pedicels, hypocotyls and roots (in primary and lateral roots, but not in root tips). Expressed in the root from the basal meristem onward. Present in the phloem pole pericycle and in the adjacent phloem.

It localises to the cell membrane. The catalysed reaction is L-tyrosyl-[protein] + ATP = O-phospho-L-tyrosyl-[protein] + ADP + H(+). Functionally, receptor kinase involved in the perception of C-terminally encoded plant signaling peptide (CEP) and subsequent regulation of root and shoot development. Required for xylem and phloem cell files morphology and organization, probably by preventing ectopic lignification in phloem cells. Together with CEPR2, mediates systemic nitrogen (N)-demand signaling upon the perception of root-derived peptides (e.g. CEP1) via the up-regulation of genes involved in N uptake and assimilation pathways. Positively regulates lateral root initiation and development; probably repressed by the signaling peptide CEP5. The polypeptide is Receptor protein-tyrosine kinase CEPR1 (Arabidopsis thaliana (Mouse-ear cress)).